The primary structure comprises 480 residues: ATP synthase subunit beta, chloroplastic (480 aa).

161 to 168 (GGAGVGKT) contributes to the ATP binding site.

Belongs to the ATPase alpha/beta chains family. F-type ATPases have 2 components, CF(1) - the catalytic core - and CF(0) - the membrane proton channel. CF(1) has five subunits: alpha(3), beta(3), gamma(1), delta(1), epsilon(1). CF(0) has four main subunits: a(1), b(1), b'(1) and c(9-12).

It is found in the plastid. The protein localises to the chloroplast thylakoid membrane. It catalyses the reaction ATP + H2O + 4 H(+)(in) = ADP + phosphate + 5 H(+)(out). Functionally, produces ATP from ADP in the presence of a proton gradient across the membrane. The catalytic sites are hosted primarily by the beta subunits. The chain is ATP synthase subunit beta, chloroplastic from Euglena gracilis.